We begin with the raw amino-acid sequence, 215 residues long: MEEGKNWIVPTWRVPGRRMERWHSLVKYLKYRTRDLEEVRYVPHHKVGWAWWTCSRVIFPLKGESHLEIQAYWNLTPEKGWLSSHSVRITWYTERFWTDVTPDYADILIHSTYFSCFTAGEVRRAIRGEKLLSCCNYPQAHKVQVPSLQYLALVVVQQNDRPQRKGTARKQWRRDHWRGLRVARQDYRSLKQRGSEPSAPRAHFPGVAKVLEILA.

T98 carries the phosphothreonine; by host MAP4K1 modification. Positions 110–141 match the HCCH motif motif; sequence HSTYFSCFTAGEVRRAIRGEKLLSCCNYPQAH. Phosphoserine; by host is present on S147. The BC-box-like motif signature appears at 147-156; the sequence is SLQYLALVVV. A multimerization region spans residues 154–167; sequence VVVQQNDRPQRKGT.

This sequence belongs to the primate lentivirus group Vif protein family. In terms of assembly, homomultimer; in vitro and presumably in vivo. Interacts with viral Pr55Gag precursor and human APOBEC3G. The interaction between Vif and APOBEC3G is species-specific, which may play a role in restricting the replication of HIV to humans. Forms an E3 ligase complex by interacting with human CUL5 and elongin BC complex (ELOB and ELOC). In terms of processing, processed in virion by the viral protease. Highly phosphorylated on serine and threonine residues. Post-translationally, polyubiquitinated and degraded by the proteasome in the presence of APOBEC3G.

The protein localises to the host cytoplasm. The protein resides in the host cell membrane. It localises to the virion. Its function is as follows. Counteracts the innate antiviral activity of APOBEC3G. Forms a complex with host APOBEC3G thus preventing the entry of this lethally hypermutating enzyme into progeny virions. Functions as an adapter molecule, recruiting APOBEC3G to the ubiquitin-proteasome machinery. Targets APOBEC3G for degradation through the assembly with elongin BC complex, CUL5 and RBX1. Binds viral RNA and affects the stability of viral nucleoprotein core. May play a role in viral morphology. This is Virion infectivity factor (vif) from Human immunodeficiency virus type 2 subtype A (isolate Ghana-1) (HIV-2).